A 113-amino-acid chain; its full sequence is Cell wall protein PGA59 (113 aa).

An N-terminal signal peptide occupies residues 1 to 18 (MQFSSAIILSAVAGSALA). Asn22 and Asn80 each carry an N-linked (GlcNAc...) asparagine glycan. A lipid anchor (GPI-anchor amidated glycine) is attached at Gly92. Residues 93–113 (AAAANAVPAVAAGLLALGAFM) constitute a propeptide, removed in mature form.

Belongs to the HWP1 family. In terms of processing, N- and O-glycosylated. Post-translationally, the GPI-anchor is attached to the protein in the endoplasmic reticulum and serves to target the protein to the cell surface. There, the glucosamine-inositol phospholipid moiety is cleaved off and the GPI-modified mannoprotein is covalently attached via its lipidless GPI glycan remnant to the 1,6-beta-glucan of the outer cell wall layer.

The protein localises to the secreted. It is found in the cell wall. The protein resides in the membrane. Functionally, cell wall protein necessary for cell wall integrity. Plays only a minor role in hyphal morphogenesis and is not critical to biofilm formation. This is Cell wall protein PGA59 (PGA59) from Candida albicans (strain SC5314 / ATCC MYA-2876) (Yeast).